The following is a 334-amino-acid chain: Formamidase (334 aa).

The 247-residue stretch at 14–260 folds into the CN hydrolase domain; sequence FLVAAIQFPV…WEIVTGEIYP (247 aa). Catalysis depends on Glu60, which acts as the Proton acceptor. Residue Lys133 is the Proton donor of the active site. The Nucleophile role is filled by Cys166.

This sequence belongs to the carbon-nitrogen hydrolase superfamily. Aliphatic amidase family.

The catalysed reaction is formamide + H2O = formate + NH4(+). Its function is as follows. Is an aliphatic amidase with a restricted substrate specificity, as it only hydrolyzes formamide. The sequence is that of Formamidase from Helicobacter acinonychis (strain Sheeba).